A 142-amino-acid polypeptide reads, in one-letter code: MVITLVGEKLAKPGLEFIYYGPGEPCKTCRLARVCIGNLEPGRRYKIVRVRNIEHPCPLHEGKVRVVEVVEPAIEVLMEPRYAIVGSKIKLSFVECNDDDKAELVRPEGLFEGDLVKILEIVDDVECGGRKYKLVKVMREKG.

It belongs to the UPF0179 family.

This chain is UPF0179 protein PH1477, found in Pyrococcus horikoshii (strain ATCC 700860 / DSM 12428 / JCM 9974 / NBRC 100139 / OT-3).